Here is a 197-residue protein sequence, read N- to C-terminus: MSERTAYVERNTLETQVKVTINLDGTGKARFAIGVPFLEHMLDQIARHGLIDLDIECNGDLHIDDHHTVEDVGITLGQAFAKAIGDKKGMTRYGHAYVPLDEALSRVVIDFSGRPGLTMHVPYTRAVVGKFDVDLFQEFFQGFVNHALVTLHIDNLRGTNTHHQIETVFKAFGRALRMAIELDPRMAGQMPSTKGCL.

It belongs to the imidazoleglycerol-phosphate dehydratase family.

It localises to the cytoplasm. The enzyme catalyses D-erythro-1-(imidazol-4-yl)glycerol 3-phosphate = 3-(imidazol-4-yl)-2-oxopropyl phosphate + H2O. The protein operates within amino-acid biosynthesis; L-histidine biosynthesis; L-histidine from 5-phospho-alpha-D-ribose 1-diphosphate: step 6/9. The sequence is that of Imidazoleglycerol-phosphate dehydratase from Stutzerimonas stutzeri (strain A1501) (Pseudomonas stutzeri).